We begin with the raw amino-acid sequence, 189 residues long: dCTP deaminase (189 aa).

DCTP is bound by residues 112–117, 136–138, Gln157, Tyr171, and Gln181; these read KSTYAR and TLE. Glu138 serves as the catalytic Proton donor/acceptor.

The protein belongs to the dCTP deaminase family. In terms of assembly, homotrimer.

It catalyses the reaction dCTP + H2O + H(+) = dUTP + NH4(+). Its pathway is pyrimidine metabolism; dUMP biosynthesis; dUMP from dCTP (dUTP route): step 1/2. Its function is as follows. Catalyzes the deamination of dCTP to dUTP. The polypeptide is dCTP deaminase (Paraburkholderia phymatum (strain DSM 17167 / CIP 108236 / LMG 21445 / STM815) (Burkholderia phymatum)).